A 2225-amino-acid chain; its full sequence is Multifunctional protein CAD (2225 aa).

N-acetylalanine is present on Ala2. Positions Ala2–Pro365 are GATase (Glutamine amidotransferase). L-glutamine is bound by residues Ser44, Gly222, and Gly224. Residues Arg177–Gly363 enclose the Glutamine amidotransferase type-1 domain. Cys252 acts as the Nucleophile; for GATase activity in catalysis. Positions 253, 256, 294, 296, and 297 each coordinate L-glutamine. Catalysis depends on for GATase activity residues His336 and Glu338. The tract at residues Gly366–Arg394 is linker. The tract at residues Lys395–Pro933 is CPSase A. The CPSase (Carbamoyl phosphate synthase) stretch occupies residues Lys395–Cys1455. Position 456 is a phosphothreonine; by MAPK1 (Thr456). Arg515, Arg555, Gly561, Gly562, Lys592, Glu599, Gly625, Ile626, His627, Gln668, and Glu682 together coordinate ATP. The ATP-grasp 1 domain maps to Ala519–Leu711. Gln668, Glu682, and Asn684 together coordinate Mg(2+). Positions 668, 682, and 684 each coordinate Mn(2+). N6-acetyllysine is present on Lys747. The tract at residues His934–Cys1455 is CPSase B. Ser1038 is subject to Phosphoserine. The ATP-grasp 2 domain occupies Ser1052–Met1243. Residues Arg1088, Lys1127, Ile1129, Glu1134, Gly1159, Val1160, His1161, Ser1162, Gln1202, and Glu1214 each contribute to the ATP site. Mg(2+)-binding residues include Gln1202, Glu1214, and Asn1216. Positions 1202, 1214, and 1216 each coordinate Mn(2+). The MGS-like domain maps to Phe1308–Val1462. The residue at position 1406 (Ser1406) is a Phosphoserine; by PKA. Lys1411 carries the post-translational modification N6-acetyllysine. The DHOase (dihydroorotase) stretch occupies residues Met1456–Leu1788. The Zn(2+) site is built by His1471 and His1473. 2 residues coordinate (S)-dihydroorotate: Arg1475 and Asn1505. Residues Lys1556, His1590, Cys1613, His1614, and Glu1637 each contribute to the Zn(2+) site. Lys1556 is modified (N6-carboxylysine). Arg1661 lines the (S)-dihydroorotate pocket. Asp1686 provides a ligand contact to Zn(2+). Residue Asp1686 is the For DHOase activity of the active site. 2 residues coordinate (S)-dihydroorotate: His1690 and Pro1702. Residues Arg1789–Leu1917 form a linker region. A disordered region spans residues Lys1811–Ala1899. The segment covering Pro1825 to Pro1834 has biased composition (polar residues). Ser1859 carries the phosphoserine; by RPS6KB1 and PKA modification. Over residues Glu1866–Glu1878 the composition is skewed to basic and acidic residues. Position 1873 is a phosphoserine; by PKC; in vitro (Ser1873). A Phosphothreonine modification is found at Thr1884. Ser1900 and Ser1938 each carry phosphoserine. The interval Leu1918–Phe2225 is ATCase (Aspartate transcarbamylase). Arg1975 and Thr1976 together coordinate carbamoyl phosphate. Lys2003 lines the L-aspartate pocket. Carbamoyl phosphate-binding residues include Arg2024, His2052, and Gln2055. Residues Arg2085 and Arg2146 each coordinate L-aspartate. The carbamoyl phosphate site is built by Met2185 and Pro2186.

In the N-terminal section; belongs to the CarA family. The protein in the 2nd section; belongs to the CarB family. This sequence in the 3rd section; belongs to the metallo-dependent hydrolases superfamily. DHOase family. CAD subfamily. It in the C-terminal section; belongs to the aspartate/ornithine carbamoyltransferase superfamily. ATCase family. As to quaternary structure, homohexamer. Interacts with CIPC. Requires Zn(2+) as cofactor. The cofactor is Mg(2+). It depends on Mn(2+) as a cofactor. Post-translationally, activated by MAP kinase (Erk1/2) phosphorylation just prior to the S phase of the cell cycle, when the demand for pyrimidine nucleotides is greatest, and down-regulated as the cells emerge from S phase by protein kinase A (PKA) phosphorylation. Phosphorylation at Ser-1859 by RPS6KB1 downstream of MTOR promotes oligomerization and stimulates dihydroorotase activity. Phosphorylation at Ser-1406 reduces sensitivity to feedback inhibition by UTP.

Its subcellular location is the cytoplasm. The protein resides in the nucleus. The catalysed reaction is hydrogencarbonate + L-glutamine + 2 ATP + H2O = carbamoyl phosphate + L-glutamate + 2 ADP + phosphate + 2 H(+). It catalyses the reaction L-glutamine + H2O = L-glutamate + NH4(+). The enzyme catalyses hydrogencarbonate + NH4(+) + 2 ATP = carbamoyl phosphate + 2 ADP + phosphate + 2 H(+). It carries out the reaction carbamoyl phosphate + L-aspartate = N-carbamoyl-L-aspartate + phosphate + H(+). The catalysed reaction is (S)-dihydroorotate + H2O = N-carbamoyl-L-aspartate + H(+). The protein operates within pyrimidine metabolism; UMP biosynthesis via de novo pathway; (S)-dihydroorotate from bicarbonate: step 1/3. It participates in pyrimidine metabolism; UMP biosynthesis via de novo pathway; (S)-dihydroorotate from bicarbonate: step 2/3. It functions in the pathway pyrimidine metabolism; UMP biosynthesis via de novo pathway; (S)-dihydroorotate from bicarbonate: step 3/3. With respect to regulation, allosterically regulated and controlled by phosphorylation. 5-phosphoribose 1-diphosphate (PRPP) is an activator while UMP and UTP are inhibitors of the CPSase reaction. Functionally, multifunctional protein that encodes the first 3 enzymatic activities of the de novo pyrimidine pathway: carbamoylphosphate synthetase (CPSase; EC 6.3.5.5), aspartate transcarbamylase (ATCase; EC 2.1.3.2) and dihydroorotase (DHOase; EC 3.5.2.3). The CPSase-function is accomplished in 2 steps, by a glutamine-dependent amidotransferase activity (GATase) that binds and cleaves glutamine to produce ammonia, followed by an ammonium-dependent carbamoyl phosphate synthetase, which reacts with the ammonia, hydrogencarbonate and ATP to form carbamoyl phosphate. The endogenously produced carbamoyl phosphate is sequestered and channeled to the ATCase active site. ATCase then catalyzes the formation of carbamoyl-L-aspartate from L-aspartate and carbamoyl phosphate. In the last step, DHOase catalyzes the cyclization of carbamoyl aspartate to dihydroorotate. The sequence is that of Multifunctional protein CAD from Homo sapiens (Human).